Here is a 121-residue protein sequence, read N- to C-terminus: Holin-like protein CidA 1 (121 aa).

4 helical membrane passes run 7 to 24 (SGQILLLFCFAWTGEWIA), 28 to 50 (HLPVPGSIIGIFLLLISLKFNLV), 62 to 81 (LLKELILFFIPSAVAVIRYR), and 91 to 113 (LILIIMISTLCVTLVTGLLTELL).

The protein belongs to the CidA/LrgA family. CidA subfamily.

The protein resides in the cell membrane. In terms of biological role, increases the activity of extracellular murein hydrolases possibly by mediating their export via hole formation. Inhibited by the antiholin-like proteins LrgAB. In an unstressed cell, the LrgAB products probably inhibit the function of the CidA protein. When a cell is stressed by the addition of antibiotics or by other factors in the environment, CidA possibly oligomerizes within the bacterial cell membrane, creating lesions that disrupt the proton motive force, which in turn results in loss of cell viability. These lesions are also hypothesized to regulate the subsequent cell lysis by either allowing the murein hydrolases access to the cell wall substrate and/or regulating their activity by a possible change in the cell wall pH that results from loss of membrane potential. This Bacillus cereus (strain ATCC 14579 / DSM 31 / CCUG 7414 / JCM 2152 / NBRC 15305 / NCIMB 9373 / NCTC 2599 / NRRL B-3711) protein is Holin-like protein CidA 1 (cidA1).